The chain runs to 503 residues: MSEDYVLEMIDITKEFPGVKALDGVQLKVKRGTVHALMGENGAGKSTLMKILIGIYTPDRGKIILDGEELKVSTIKHALDRGISMIHQELSPVPNMTVAENIFLGREPSYPFAGWVKMKELVKKTRQLFERLEIDIDPNAKMADLSIANMQMVEIAKAISYHSKLIIMDEPTSAITEKEVHHLFRIIRSLKKEGVSIIYITHKMDELEQITDEVTVLRDGKYIGTKPSHQMTRDELIQMMVGRELNQIFHKPKVPIGEVALSVQGLTKKGKFHDVSFEVRKGEIVGFAGLMGSGRTEVLESVFGVTKPDAGDIYVHGKKATIRSTRDAIRYGMGLLTEDRKLTGLFLPLSVEDNMITVTVNQYTKAGFLQQRKIREDCQRLAEQLSIKTPSLQQLIKYLSGGNQQKALIARWLLHNPDILFLDEPTRGIDVGAKAEIYHLIFELAKNGKAIIVVSSEMPEILGLSDRVIVMHEGRKMGELTREEATQERIMQLATGQLIETKR.

ABC transporter domains lie at 7–244 (LEMI…VGRE) and 254–498 (VPIG…TGQL). Position 39–46 (39–46 (GENGAGKS)) interacts with ATP.

Belongs to the ABC transporter superfamily. Carbohydrate importer 2 (CUT2) (TC 3.A.1.2) family.

It localises to the cell membrane. It carries out the reaction D-ribose(out) + ATP + H2O = D-ribose(in) + ADP + phosphate + H(+). The catalysed reaction is D-galactose(out) + ATP + H2O = D-galactose(in) + ADP + phosphate + H(+). Part of an ABC transporter complex involved in carbohydrate import. Could be involved in ribose, galactose and/or methyl galactoside import. Responsible for energy coupling to the transport system. The protein is Putative ribose/galactose/methyl galactoside import ATP-binding protein of Geobacillus kaustophilus (strain HTA426).